Consider the following 287-residue polypeptide: Phosphoribosylaminoimidazole-succinocarboxamide synthase (287 aa).

This sequence belongs to the SAICAR synthetase family.

The enzyme catalyses 5-amino-1-(5-phospho-D-ribosyl)imidazole-4-carboxylate + L-aspartate + ATP = (2S)-2-[5-amino-1-(5-phospho-beta-D-ribosyl)imidazole-4-carboxamido]succinate + ADP + phosphate + 2 H(+). It functions in the pathway purine metabolism; IMP biosynthesis via de novo pathway; 5-amino-1-(5-phospho-D-ribosyl)imidazole-4-carboxamide from 5-amino-1-(5-phospho-D-ribosyl)imidazole-4-carboxylate: step 1/2. This chain is Phosphoribosylaminoimidazole-succinocarboxamide synthase, found in Neisseria meningitidis serogroup A / serotype 4A (strain DSM 15465 / Z2491).